The primary structure comprises 744 residues: MAGRRAMRPSGSSMRGVVARLAAARSPAVSFLVAAAAGAALVGGVYFWLVVSSFRLPDSRAVGCLPDGEGSWAIGMYYGKSPLELRPIELEGRSNGNSSAWPVANPVLTCATPTEGGYPSNFVADPFLYVQGDTLFLFFETKTVSTMQGDIGVARSLDQGATWEFLGIALDEAWHLSYPFVFKYENEIYMMPEGNKKKELRLYRATKFPLEWTLEKVLIDKPLIDSSLVQYDGLWWLFASDFTRHGIEKNAELEIRYSNSPLGPWSEHKQNPIYRSDKSLGARNGGRLFIFEGSLYRPGQDCSGTYGRKVKLYKIEKLTKEEYKEVPVNLGIEEAKKGRNAWNGMRYHHIDAQQLASGGWVAVMDGDRVPSGDSTRRSLFGYMGFLVAVALVTFVGFVKGAISCYIPPSFWVPLTRRSELSRILPVHRFNLKIRRYSTSIGRNISATKARLSEKTWSNTLFFCVIALIGIVNVCIAVHFLLGGNGAEEAYTHQGQHSQFTMVTMTYEARLWNLKLFVEHYSRCESVREIVVVWNKGNHPTSDAFDSTVPVRIRVEEINSLNNRFRGDPLIKTRAVLELDDDIMMTCSDVEKGFKVWREHPERMVGFYPRMIDGDPLQYRNERYARGKKGYNLILTGAAFMDSEFAFSKYWSQEAKEGRDYVHKNFNCEDLLMNFLYANASSSRTVEYVHPAWAIDTSKLSSVAISRDTQKHYDIRTKCLAKFASIYGPLPQKWLFGMREDGWDK.

3 helical membrane-spanning segments follow: residues 31 to 51 (FLVA…WLVV), 378 to 398 (SLFG…VGFV), and 460 to 480 (LFFC…VHFL). Substrate contacts are provided by residues asparagine 534, 558-563 (NSLNNR), 579-581 (DDD), arginine 609, and 665-669 (FNCED). Aspartate 581 lines the Mn(2+) pocket. Cysteine 667 and cysteine 718 are disulfide-bonded. Residue aspartate 669 is part of the active site.

The protein belongs to the glycosyltransferase 64 family. Requires Mn(2+) as cofactor.

The protein resides in the membrane. Its pathway is sphingolipid metabolism. Functionally, essential protein. Glycosyltransferase that mediates the glycosylation of glycosylinositol phosphorylceramides (GIPCs), the major sphingolipids in the plasma membrane; acts as a HexN(Ac)-specific GIPC sugar transferase. Responsible for the glycosylation of a subgroup of GIPCs found in seeds and pollen that contain GlcNAc and GlcN (GlcN(Ac)). Maybe involved in the maintenance of cell-cell adhesion. This Oryza sativa subsp. indica (Rice) protein is Glucosamine inositolphosphorylceramide transferase 1.